A 700-amino-acid polypeptide reads, in one-letter code: Long chain acyl-CoA synthetase 7, peroxisomal (700 aa).

Residues 1–29 (MEFASPEQRRLETIRSHIDTSPTNDQSSS) form a disordered region. Residues 7-18 (EQRRLETIRSHI) are compositionally biased toward basic and acidic residues. Positions 10 to 18 (RLETIRSHI) match the Microbody targeting signal motif. A compositionally biased stretch (polar residues) spans 19-29 (DTSPTNDQSSS). Residue 266-277 (ICYTSGTTGTPK) coordinates ATP. The interval 526-550 (DGWLHTGDIGLWLPGGRLKIIDRKK) is fatty acid-binding. Positions 698–700 (SKL) match the Microbody targeting signal motif.

It belongs to the ATP-dependent AMP-binding enzyme family. As to quaternary structure, interacts with PEX5. Requires Mg(2+) as cofactor. In terms of tissue distribution, expressed in roots, stems, leaves flowers and germinating seedling. Preferentially expressed in seeds.

It localises to the peroxisome. It catalyses the reaction a long-chain fatty acid + ATP + CoA = a long-chain fatty acyl-CoA + AMP + diphosphate. The catalysed reaction is decanoate + ATP + CoA = decanoyl-CoA + AMP + diphosphate. The enzyme catalyses dodecanoate + ATP + CoA = dodecanoyl-CoA + AMP + diphosphate. It carries out the reaction tetradecanoate + ATP + CoA = tetradecanoyl-CoA + AMP + diphosphate. It catalyses the reaction hexadecanoate + ATP + CoA = hexadecanoyl-CoA + AMP + diphosphate. The catalysed reaction is (9Z)-octadecenoate + ATP + CoA = (9Z)-octadecenoyl-CoA + AMP + diphosphate. The enzyme catalyses (9Z,12Z)-octadecadienoate + ATP + CoA = (9Z,12Z)-octadecadienoyl-CoA + AMP + diphosphate. It carries out the reaction (9Z,12Z,15Z)-octadecatrienoate + ATP + CoA = (9Z,12Z,15Z)-octadecatrienoyl-CoA + AMP + diphosphate. It participates in lipid metabolism; fatty acid metabolism. Activation of long-chain fatty acids for both synthesis of cellular lipids, and degradation via beta-oxidation. Preferentially uses palmitate, palmitoleate, oleate, linoleate and eicosenoate as substrates. Can use myristate and linolenate as substrates. Functions redundantly with LACS6 in lipid mobilization for beta-oxidation during seed germination, which is essential for postgerminative growth and seedling establishment. The sequence is that of Long chain acyl-CoA synthetase 7, peroxisomal from Arabidopsis thaliana (Mouse-ear cress).